The sequence spans 188 residues: Small ribosomal subunit protein bS16 (188 aa).

The tract at residues 155–188 is disordered; sequence IAAASATEEAATEEVAEAAEEAPAAEENNETTEA. Positions 164–188 are enriched in acidic residues; that stretch reads AATEEVAEAAEEAPAAEENNETTEA.

The protein belongs to the bacterial ribosomal protein bS16 family.

The sequence is that of Small ribosomal subunit protein bS16 from Flavobacterium johnsoniae (strain ATCC 17061 / DSM 2064 / JCM 8514 / BCRC 14874 / CCUG 350202 / NBRC 14942 / NCIMB 11054 / UW101) (Cytophaga johnsonae).